A 376-amino-acid chain; its full sequence is DNA replication and repair protein RecF (376 aa).

Gly35–Thr42 is a binding site for ATP.

This sequence belongs to the RecF family.

Its subcellular location is the cytoplasm. Functionally, the RecF protein is involved in DNA metabolism; it is required for DNA replication and normal SOS inducibility. RecF binds preferentially to single-stranded, linear DNA. It also seems to bind ATP. This is DNA replication and repair protein RecF from Agrobacterium fabrum (strain C58 / ATCC 33970) (Agrobacterium tumefaciens (strain C58)).